The chain runs to 250 residues: Coproheme decarboxylase (250 aa).

Fe-coproporphyrin III is bound by residues Arg-131, 145 to 149 (YPMNK), His-172, and Gln-185. Tyr-145 is a catalytic residue.

This sequence belongs to the ChdC family. Type 1 subfamily. Fe-coproporphyrin III serves as cofactor.

The catalysed reaction is Fe-coproporphyrin III + 2 H2O2 + 2 H(+) = heme b + 2 CO2 + 4 H2O. It carries out the reaction Fe-coproporphyrin III + H2O2 + H(+) = harderoheme III + CO2 + 2 H2O. It catalyses the reaction harderoheme III + H2O2 + H(+) = heme b + CO2 + 2 H2O. Its pathway is porphyrin-containing compound metabolism; protoheme biosynthesis. Involved in coproporphyrin-dependent heme b biosynthesis. Catalyzes the decarboxylation of Fe-coproporphyrin III (coproheme) to heme b (protoheme IX), the last step of the pathway. The reaction occurs in a stepwise manner with a three-propionate intermediate. The sequence is that of Coproheme decarboxylase from Staphylococcus aureus (strain MSSA476).